The chain runs to 782 residues: Ribosome biogenesis protein ERB1 (782 aa).

Basic residues predominate over residues 1–11; it reads MSVNSRKRKVA. A disordered region spans residues 1 to 120; sequence MSVNSRKRKV…LEGEEDESLK (120 aa). Acidic residues-rich tracts occupy residues 39–51 and 59–75; these read DESE…EDTD and LSDE…DEAE. Positions 82-92 are enriched in polar residues; that stretch reads RNLNTSGGSQQ. A compositionally biased stretch (acidic residues) spans 106 to 117; it reads GADGELEGEEDE. WD repeat units lie at residues 432–471 and 475–516; these read GQEG…QVWN and SDEE…PDVE. Residues 533–556 are disordered; it reads KPSTAANGEAPKQSPGKWSRPGSR. 4 WD repeats span residues 612–652, 653–692, 696–736, and 752–782; these read RLKG…KILQ, PGAK…KPYK, FHKE…DLME, and KSRL…RLWN.

This sequence belongs to the WD repeat BOP1/ERB1 family. In terms of assembly, component of the NOP7 complex, composed of ERB1, NOP7 and YTM1. The complex is held together by ERB1, which interacts with NOP7 via its N-terminal domain and with YTM1 via a high-affinity interaction between the seven-bladed beta-propeller domains of the 2 proteins. The NOP7 complex associates with the 66S pre-ribosome.

It is found in the nucleus. The protein localises to the nucleolus. The protein resides in the nucleoplasm. Its function is as follows. Component of the NOP7 complex, which is required for maturation of the 25S and 5.8S ribosomal RNAs and formation of the 60S ribosome. This Phaeosphaeria nodorum (strain SN15 / ATCC MYA-4574 / FGSC 10173) (Glume blotch fungus) protein is Ribosome biogenesis protein ERB1.